We begin with the raw amino-acid sequence, 1025 residues long: Rho GTPase-activating protein Graf (1025 aa).

One can recognise a PH domain in the interval 271 to 388 (IFTKRGYLFL…WISAMDGTEP (118 aa)). In terms of domain architecture, Rho-GAP spans 402–589 (YHLDEAGFMF…ILIDNYERIF (188 aa)). Residues 824-866 (GSASGPQQHPPVQRGLHSYGQTKHYSPLMPTSTSSSNDSVCDS) are disordered. Residues 854 to 866 (TSTSSSNDSVCDS) are compositionally biased toward low complexity. One can recognise an SH3 domain in the interval 963–1023 (TGTARVRTLY…PENYVEHLKP (61 aa)).

Interacts with Egfr (when ubiquitinated). In the adult brain, expressed in the antennal lobe, the subesophageal ganglion and the alpha/beta neurons of the mushroom body.

The protein resides in the cytoplasm. It localises to the cytosol. The protein localises to the cytoplasmic vesicle. In terms of biological role, GTPase-activating protein for Rho family proteins. Essential component of the CLIC (clathrin-independent carrier)/GEEC (GPI-anchored protein-enriched early endocytic compartment) endocytic pathway. During hematopoiesis, inhibits Egfr-ras-MAPK signaling by promoting Spi-induced Egfr internalization through CLIC/GEEC endocytosis, thereby preventing plasmatocyte overproliferation. Essential for normal mushroom body (MB) development and consequently the formation of olfactory long-term memories. During MD development, required to stop the MB beta-lobe from crossing the brain midline, possibly acting via its role in the CLIC/GEEC endocytic pathway to down-regulate the Egfr-ras-MAPK signaling at the tip of the beta-lobes. Required during embryo cellularization for maintaining and regulating the rate of actomyosin ring constriction. During cellularization, inhibits Rho-GTP levels at the furrow canal tip in a spatiotemporal manner, thus delaying the onset of actomyosin contraction and ensuring appropriate closure of the cells at the base of nuclei after membrane extension. This chain is Rho GTPase-activating protein Graf, found in Drosophila melanogaster (Fruit fly).